Here is a 292-residue protein sequence, read N- to C-terminus: Glycine--tRNA ligase alpha subunit (292 aa).

The protein belongs to the class-II aminoacyl-tRNA synthetase family. As to quaternary structure, tetramer of two alpha and two beta subunits.

The protein localises to the cytoplasm. It carries out the reaction tRNA(Gly) + glycine + ATP = glycyl-tRNA(Gly) + AMP + diphosphate. This is Glycine--tRNA ligase alpha subunit from Pelobacter propionicus (strain DSM 2379 / NBRC 103807 / OttBd1).